The following is a 120-amino-acid chain: Large ribosomal subunit protein bL21 (120 aa).

The protein belongs to the bacterial ribosomal protein bL21 family. Part of the 50S ribosomal subunit. Contacts protein L20.

In terms of biological role, this protein binds to 23S rRNA in the presence of protein L20. The sequence is that of Large ribosomal subunit protein bL21 from Roseiflexus castenholzii (strain DSM 13941 / HLO8).